The following is a 397-amino-acid chain: Exodeoxyribonuclease 7 large subunit (397 aa).

This sequence belongs to the XseA family. As to quaternary structure, heterooligomer composed of large and small subunits.

It is found in the cytoplasm. The enzyme catalyses Exonucleolytic cleavage in either 5'- to 3'- or 3'- to 5'-direction to yield nucleoside 5'-phosphates.. Bidirectionally degrades single-stranded DNA into large acid-insoluble oligonucleotides, which are then degraded further into small acid-soluble oligonucleotides. The chain is Exodeoxyribonuclease 7 large subunit from Anaplasma marginale (strain St. Maries).